Consider the following 291-residue polypeptide: ATP synthase gamma chain (291 aa).

It belongs to the ATPase gamma chain family. F-type ATPases have 2 components, CF(1) - the catalytic core - and CF(0) - the membrane proton channel. CF(1) has five subunits: alpha(3), beta(3), gamma(1), delta(1), epsilon(1). CF(0) has three main subunits: a, b and c.

It localises to the cell inner membrane. Produces ATP from ADP in the presence of a proton gradient across the membrane. The gamma chain is believed to be important in regulating ATPase activity and the flow of protons through the CF(0) complex. This Ruegeria sp. (strain TM1040) (Silicibacter sp.) protein is ATP synthase gamma chain.